Reading from the N-terminus, the 467-residue chain is Indoleacetamide hydrolase (467 aa).

Catalysis depends on charge relay system residues K74 and S149. S173 (acyl-ester intermediate) is an active-site residue.

The protein belongs to the amidase family.

It functions in the pathway plant hormone metabolism; auxin biosynthesis. In terms of biological role, hydrolyzes indole-3-acetamide (IAM) into indole-3-acetic acid (IAA). This is Indoleacetamide hydrolase (TA-iaaH) from Agrobacterium vitis (Rhizobium vitis).